A 90-amino-acid chain; its full sequence is Large ribosomal subunit protein bL27 (90 aa).

The tract at residues 1–22 is disordered; the sequence is MAHKKAGGSTRNGRDSNPKMLG.

This sequence belongs to the bacterial ribosomal protein bL27 family.

The protein is Large ribosomal subunit protein bL27 of Coxiella burnetii (strain CbuK_Q154) (Coxiella burnetii (strain Q154)).